Consider the following 618-residue polypeptide: Chaperone protein DnaK (618 aa).

Threonine 175 bears the Phosphothreonine; by autocatalysis mark. A disordered region spans residues 576 to 618; it reads SQNAEPGADGGANSGANPGGTTGNTDTKDDNVVDAEYKVDDDK. The segment covering 583 to 597 has biased composition (gly residues); sequence ADGGANSGANPGGTT. Basic and acidic residues predominate over residues 601-618; sequence DTKDDNVVDAEYKVDDDK.

Belongs to the heat shock protein 70 family.

Its function is as follows. Acts as a chaperone. The protein is Chaperone protein DnaK of Clostridium kluyveri (strain NBRC 12016).